Reading from the N-terminus, the 793-residue chain is Outer membrane protein assembly factor BamA (793 aa).

The signal sequence occupies residues 1–19 (MKKLLIASLLFGTTTTVFA). POTRA domains follow at residues 22-89 (FVAK…VVAK), 90-170 (SIIS…INED), 173-259 (AKLA…VNEG), 262-341 (YDLR…VDAG), and 344-418 (LTVR…VKER).

Belongs to the BamA family. As to quaternary structure, part of the Bam complex.

The protein resides in the cell outer membrane. Its function is as follows. Part of the outer membrane protein assembly complex, which is involved in assembly and insertion of beta-barrel proteins into the outer membrane. The polypeptide is Outer membrane protein assembly factor BamA (Haemophilus influenzae).